We begin with the raw amino-acid sequence, 129 residues long: Histone H2A-III (129 aa).

This sequence belongs to the histone H2A family. In terms of assembly, the nucleosome is a histone octamer containing two molecules each of H2A, H2B, H3 and H4 assembled in one H3-H4 heterotetramer and two H2A-H2B heterodimers. The octamer wraps approximately 147 bp of DNA.

The protein localises to the nucleus. It localises to the chromosome. Its function is as follows. Core component of nucleosome. Nucleosomes wrap and compact DNA into chromatin, limiting DNA accessibility to the cellular machineries which require DNA as a template. Histones thereby play a central role in transcription regulation, DNA repair, DNA replication and chromosomal stability. DNA accessibility is regulated via a complex set of post-translational modifications of histones, also called histone code, and nucleosome remodeling. In Volvox carteri (Green alga), this protein is Histone H2A-III.